The following is a 61-amino-acid chain: MATKTLKVTQTKSSIGRLPKHRATLTGLGLRRINHTVELEDTPSVRGMINKVYYMVSVEEV.

The protein belongs to the universal ribosomal protein uL30 family. Part of the 50S ribosomal subunit.

The chain is Large ribosomal subunit protein uL30 from Shewanella piezotolerans (strain WP3 / JCM 13877).